A 369-amino-acid polypeptide reads, in one-letter code: tRNA 2-selenouridine synthase (369 aa).

The region spanning Met15–Asp138 is the Rhodanese domain. Residue Cys98 is the S-selanylcysteine intermediate of the active site.

It belongs to the SelU family. Monomer.

It carries out the reaction 5-methylaminomethyl-2-thiouridine(34) in tRNA + selenophosphate + (2E)-geranyl diphosphate + H2O + H(+) = 5-methylaminomethyl-2-selenouridine(34) in tRNA + (2E)-thiogeraniol + phosphate + diphosphate. The catalysed reaction is 5-methylaminomethyl-2-thiouridine(34) in tRNA + (2E)-geranyl diphosphate = 5-methylaminomethyl-S-(2E)-geranyl-thiouridine(34) in tRNA + diphosphate. It catalyses the reaction 5-methylaminomethyl-S-(2E)-geranyl-thiouridine(34) in tRNA + selenophosphate + H(+) = 5-methylaminomethyl-2-(Se-phospho)selenouridine(34) in tRNA + (2E)-thiogeraniol. The enzyme catalyses 5-methylaminomethyl-2-(Se-phospho)selenouridine(34) in tRNA + H2O = 5-methylaminomethyl-2-selenouridine(34) in tRNA + phosphate. In terms of biological role, involved in the post-transcriptional modification of the uridine at the wobble position (U34) of tRNA(Lys), tRNA(Glu) and tRNA(Gln). Catalyzes the conversion of 2-thiouridine (S2U-RNA) to 2-selenouridine (Se2U-RNA). Acts in a two-step process involving geranylation of 2-thiouridine (S2U) to S-geranyl-2-thiouridine (geS2U) and subsequent selenation of the latter derivative to 2-selenouridine (Se2U) in the tRNA chain. The protein is tRNA 2-selenouridine synthase of Shewanella sediminis (strain HAW-EB3).